Consider the following 188-residue polypeptide: Ribosome-recycling factor (188 aa).

The protein belongs to the RRF family.

The protein localises to the cytoplasm. Its function is as follows. Responsible for the release of ribosomes from messenger RNA at the termination of protein biosynthesis. May increase the efficiency of translation by recycling ribosomes from one round of translation to another. The polypeptide is Ribosome-recycling factor (Akkermansia muciniphila (strain ATCC BAA-835 / DSM 22959 / JCM 33894 / BCRC 81048 / CCUG 64013 / CIP 107961 / Muc)).